We begin with the raw amino-acid sequence, 224 residues long: Deoxyribose-phosphate aldolase (224 aa).

Asp-92 acts as the Proton donor/acceptor in catalysis. Catalysis depends on Lys-155, which acts as the Schiff-base intermediate with acetaldehyde. Catalysis depends on Lys-184, which acts as the Proton donor/acceptor.

This sequence belongs to the DeoC/FbaB aldolase family. DeoC type 1 subfamily.

It is found in the cytoplasm. The catalysed reaction is 2-deoxy-D-ribose 5-phosphate = D-glyceraldehyde 3-phosphate + acetaldehyde. The protein operates within carbohydrate degradation; 2-deoxy-D-ribose 1-phosphate degradation; D-glyceraldehyde 3-phosphate and acetaldehyde from 2-deoxy-alpha-D-ribose 1-phosphate: step 2/2. Functionally, catalyzes a reversible aldol reaction between acetaldehyde and D-glyceraldehyde 3-phosphate to generate 2-deoxy-D-ribose 5-phosphate. The polypeptide is Deoxyribose-phosphate aldolase (Clostridium perfringens (strain SM101 / Type A)).